The primary structure comprises 1209 residues: Phospholipid-transporting ATPase ID (1209 aa).

The span at 1–12 (MTVPKEMPEKWA) shows a compositional bias: basic and acidic residues. Positions 1 to 36 (MTVPKEMPEKWARAQAPPSWSRKKPSWGTEEERRAR) are disordered. Residues 1 to 64 (MTVPKEMPEK…TSKYNILTFL (64 aa)) lie on the Cytoplasmic side of the membrane. The chain crosses the membrane as a helical span at residues 65 to 86 (PVNLFEQFQEVANTYFLFLLIL). The Exoplasmic loop segment spans residues 87 to 92 (QLIPQI). A helical membrane pass occupies residues 93-112 (SSLSWFTTIVPLVLVLTITA). Topologically, residues 113–295 (VKDATDDYFR…TSIDRLMNTL (183 aa)) are cytoplasmic. The helical transmembrane segment at 296 to 317 (VLWIFGFLVCMGVILAIGNAIW) threads the bilayer. Residues 318-346 (EHEVGMRFQVYLPWDEAVDSAFFSGFLSF) lie on the Exoplasmic loop side of the membrane. The helical transmembrane segment at 347-368 (WSYIIILNTVVPISLYVSVEVI) threads the bilayer. Over 369-889 (RLGHSYFINW…GRWSYLRMCK (521 aa)) the chain is Cytoplasmic. D411 serves as the catalytic 4-aspartylphosphate intermediate. Residues D411, K412, T413, E515, F556, K579, R613, T693, G694, D695, R807, and K813 each coordinate ATP. D411 is a Mg(2+) binding site. A Mg(2+)-binding site is contributed by T413. Position 833 (D833) interacts with Mg(2+). ATP contacts are provided by N836 and D837. Mg(2+) is bound at residue D837. Residues 890-910 (FLCYFFYKNFAFTMVHFWFGF) traverse the membrane as a helical segment. Over 911-922 (FCGFSAQTVYDQ) the chain is Exoplasmic loop. Residues 923-942 (YFITLYNIVYTSLPVLAMGV) form a helical membrane-spanning segment. Over 943–972 (FDQDVPEQRSMEYPKLYEPGQLNLLFNKRE) the chain is Cytoplasmic. Residues 973–994 (FFICIAQGIYTSVLMFFIPYGV) traverse the membrane as a helical segment. Over 995-1008 (FADATRDDGTQLAD) the chain is Exoplasmic loop. Residues 1009–1031 (YQSFAVTVATSLVIVVSVQIGLD) traverse the membrane as a helical segment. The Cytoplasmic portion of the chain corresponds to 1032–1037 (TGYWTA). A helical transmembrane segment spans residues 1038–1058 (INHFFIWGSLAVYFAILFAMH). Over 1059–1078 (SNGLFDMFPNQFRFVGNAQN) the chain is Exoplasmic loop. Residues 1079–1103 (TLAQPTVWLTIVLTTVVCIMPVVAF) traverse the membrane as a helical segment. Topologically, residues 1104-1209 (RFLRLNLKPD…SGGADKPLKG (106 aa)) are cytoplasmic. The residue at position 1175 (S1175) is a Phosphoserine. Residues 1181-1209 (SSSWIESLRRKKSDSASSPSGGADKPLKG) form a disordered region. Positions 1195–1209 (SASSPSGGADKPLKG) are enriched in low complexity.

It belongs to the cation transport ATPase (P-type) (TC 3.A.3) family. Type IV subfamily. In terms of assembly, component of a P4-ATPase flippase complex which consists of a catalytic alpha subunit ATP8B2 and an accessory beta subunit TMEM30A or TMEM30B. It depends on Mg(2+) as a cofactor. In terms of tissue distribution, isoform 3 is ubiquitous, with highest expression in aorta, cerebellum and uterus.

The protein localises to the cell membrane. The protein resides in the endoplasmic reticulum membrane. The enzyme catalyses ATP + H2O + phospholipidSide 1 = ADP + phosphate + phospholipidSide 2.. It catalyses the reaction a 1,2-diacyl-sn-glycero-3-phosphocholine(out) + ATP + H2O = a 1,2-diacyl-sn-glycero-3-phosphocholine(in) + ADP + phosphate + H(+). Catalytic component of P4-ATPase flippase complex, which catalyzes the hydrolysis of ATP coupled to the transport of phosphatidylcholine (PC) from the outer to the inner leaflet of the plasma membrane. May contribute to the maintenance of membrane lipid asymmetry. This chain is Phospholipid-transporting ATPase ID, found in Homo sapiens (Human).